Consider the following 122-residue polypeptide: MIQMQSMLGVADNSGARSVMCIKVLGGSHRRYAGIGDIIKVSIKEAIPRGKVKKGDVYNAVVVRTRKGVRRPDGSVIRFDNNAAVLLNNNQQPIGTRIFGPVTRELRNEKFMKIVSLAPEVL.

This sequence belongs to the universal ribosomal protein uL14 family. Part of the 50S ribosomal subunit. Forms a cluster with proteins L3 and L19. In the 70S ribosome, L14 and L19 interact and together make contacts with the 16S rRNA in bridges B5 and B8.

In terms of biological role, binds to 23S rRNA. Forms part of two intersubunit bridges in the 70S ribosome. This is Large ribosomal subunit protein uL14 from Aeromonas salmonicida (strain A449).